The following is a 75-amino-acid chain: Translational regulator CsrA (75 aa).

Belongs to the CsrA/RsmA family. As to quaternary structure, homodimer; the beta-strands of each monomer intercalate to form a hydrophobic core, while the alpha-helices form wings that extend away from the core. Interacts with FliW.

It localises to the cytoplasm. Its function is as follows. A translational regulator that binds mRNA to regulate translation initiation and/or mRNA stability. Usually binds in the 5'-UTR at or near the Shine-Dalgarno sequence preventing ribosome-binding, thus repressing translation. Its function is probably anatagonized by FliW. Inhibits translation of flaA mRNA in vitro. Involved in post-transcriptional regulation of flagellin biosynthesis. This chain is Translational regulator CsrA, found in Campylobacter jejuni subsp. jejuni serotype O:6 (strain 81116 / NCTC 11828).